The sequence spans 196 residues: Putative NADH dehydrogenase/NAD(P)H nitroreductase xcc-b100_0585 (196 aa).

It belongs to the nitroreductase family. HadB/RutE subfamily. It depends on FMN as a cofactor.

The sequence is that of Putative NADH dehydrogenase/NAD(P)H nitroreductase xcc-b100_0585 from Xanthomonas campestris pv. campestris (strain B100).